We begin with the raw amino-acid sequence, 274 residues long: Eukaryotic translation initiation factor 3 subunit G (274 aa).

Ser146, Ser164, and Ser171 each carry phosphoserine. Residues 149 to 170 (ANTSAAATPEPDTDASGKYVPP) are disordered. The region spanning 191–270 (TTLKISQLNT…LILHLEWPKK (80 aa)) is the RRM domain.

This sequence belongs to the eIF-3 subunit G family. Component of the eukaryotic translation initiation factor 3 (eIF-3) complex.

The protein localises to the cytoplasm. Functionally, RNA-binding component of the eukaryotic translation initiation factor 3 (eIF-3) complex, which is involved in protein synthesis of a specialized repertoire of mRNAs and, together with other initiation factors, stimulates binding of mRNA and methionyl-tRNAi to the 40S ribosome. The eIF-3 complex specifically targets and initiates translation of a subset of mRNAs involved in cell proliferation. This subunit can bind 18S rRNA. The polypeptide is Eukaryotic translation initiation factor 3 subunit G (Meyerozyma guilliermondii (strain ATCC 6260 / CBS 566 / DSM 6381 / JCM 1539 / NBRC 10279 / NRRL Y-324) (Yeast)).